We begin with the raw amino-acid sequence, 658 residues long: Glycogen debranching enzyme (658 aa).

Asp-336 (nucleophile) is an active-site residue. Catalysis depends on Glu-371, which acts as the Proton donor. The tract at residues 459-483 (EANGEENRDGTNSNYSDNHGKEGLG) is disordered.

It belongs to the glycosyl hydrolase 13 family.

The enzyme catalyses Hydrolysis of (1-&gt;6)-alpha-D-glucosidic linkages to branches with degrees of polymerization of three or four glucose residues in limit dextrin.. It participates in glycan degradation; glycogen degradation. Removes maltotriose and maltotetraose chains that are attached by 1,6-alpha-linkage to the limit dextrin main chain, generating a debranched limit dextrin. The chain is Glycogen debranching enzyme from Salmonella agona (strain SL483).